The following is an 84-amino-acid chain: MAQTQSPLQWLATTFIRGYQIFISPLLGPRCRFNPTCSHYAIEAIKVHGTAKGCWFALKRILKCHPLHPGGSDPVPPKNDRCNK.

Belongs to the UPF0161 family.

Its subcellular location is the cell inner membrane. In terms of biological role, could be involved in insertion of integral membrane proteins into the membrane. In Shewanella sp. (strain ANA-3), this protein is Putative membrane protein insertion efficiency factor.